A 707-amino-acid chain; its full sequence is MTKRLTPQEKLSRKPASRACTFCHQKHLQCSNERPCKNCVKRNIADQCQDITRKRVKYLTGANSKAVAAATTPEATTTTPKRKQKRSVKGSPSISFPSSSISPINTSTFDTNGHPNGHPNDLLRQSLEASQAGQAQAPSLLEIQGPFPQMQTLQPTHTVASETSSSYSQVQPQHHPESSVPPSAPPESVDQLQQLMMHDSAYFNTNNVALNPTNVLEADPFDGHTNTMLNTTTDVLNKLLNDHYEIDNILQPPDDALLVDQQQSSSEATGTSASKAVPMGPSHSNTHFSSNYLNEEYLMLGDILLQSKPTSPSPSNTSASEYNMLSPSYTQNIDFDNIHLSKRKVVQKLKDSRPFISLGFPKDSSLSLDNLNNMAHQTDNLLDNNVSSRGNNNTSNQKLQSAIASKTSKTNPIINFATKYSTEYVSPLSTHQIYQTVSDIYSKDVLNYEYPNSYHALTHFLKTRFSGNNLPHEEKARKRQNLLVILKLIASYRPTFISAHKSLLKPQDLLFLEMSFQRCLIDYEKLSQLNSSPTIIWRRTGEIVSITDDLLSLLGYKLLDILSKRTFIMEIMYDDESIVKYFQLFKSVAVGNLHSSINTKVKLIKNGGAVPGGGTSNGKYNYNNNYNHNYSHNNNNNNNSNNSNNNGMSTGAGNSGDGDGLENNVGTNSYIEFCSVWTVKRDLFDIPMLIIGQFLPILPAGDGVRMY.

The zn(2)-C6 fungal-type DNA-binding region spans 20 to 48; sequence CTFCHQKHLQCSNERPCKNCVKRNIADQC. 4 disordered regions span residues 63–122, 154–188, 260–283, and 385–404; these read NSKA…PNDL, QPTHTVASETSSSYSQVQPQHHPESSVPPSAPPES, DQQQSSSEATGTSASKAVPMGPSH, and NVSSRGNNNTSNQKLQSAIA. Composition is skewed to low complexity over residues 66 to 79 and 91 to 104; these read AVAAATTPEATTTT and SPSISFPSSSISPI. Composition is skewed to polar residues over residues 105 to 114 and 154 to 172; these read NTSTFDTNGH and QPTHTVASETSSSYSQVQP. The span at 178–188 shows a compositional bias: low complexity; it reads SSVPPSAPPES. The segment covering 260–274 has biased composition (polar residues); the sequence is DQQQSSSEATGTSAS. Residues 522–591 form the PAS domain; that stretch reads DYEKLSQLNS…FQLFKSVAVG (70 aa). The segment covering 621–652 has biased composition (low complexity); sequence NYNNNYNHNYSHNNNNNNNSNNSNNNGMSTGA. The interval 621-659 is disordered; that stretch reads NYNNNYNHNYSHNNNNNNNSNNSNNNGMSTGAGNSGDGD.

It belongs to the ERT1/acuK family.

It localises to the nucleus. Its function is as follows. Transcription factor which regulates nonfermentable carbon utilization. The polypeptide is Glucose starvation modulator protein 1 (GSM1) (Lodderomyces elongisporus (strain ATCC 11503 / CBS 2605 / JCM 1781 / NBRC 1676 / NRRL YB-4239) (Yeast)).